Reading from the N-terminus, the 328-residue chain is Phenylalanine--tRNA ligase alpha subunit (328 aa).

Position 245 (Glu245) interacts with Mg(2+).

It belongs to the class-II aminoacyl-tRNA synthetase family. Phe-tRNA synthetase alpha subunit type 1 subfamily. Tetramer of two alpha and two beta subunits. Mg(2+) serves as cofactor.

The protein localises to the cytoplasm. The catalysed reaction is tRNA(Phe) + L-phenylalanine + ATP = L-phenylalanyl-tRNA(Phe) + AMP + diphosphate + H(+). This chain is Phenylalanine--tRNA ligase alpha subunit, found in Helicobacter pylori (strain HPAG1).